Consider the following 93-residue polypeptide: MGRSLKKGPFVDDHLMKKVDEQNEKNEKRVIKTWSRRSTIFPDFVGHTFAVYDGRKHVPVYVSEDMVGHKLGEFAPTRTFKGHVDNDKKSKKR.

The protein belongs to the universal ribosomal protein uS19 family.

Protein S19 forms a complex with S13 that binds strongly to the 16S ribosomal RNA. The protein is Small ribosomal subunit protein uS19 of Brevibacillus brevis (strain 47 / JCM 6285 / NBRC 100599).